Here is a 471-residue protein sequence, read N- to C-terminus: Glutamate--tRNA ligase (471 aa).

The short motif at 9-19 (PSPTGYLHVGG) is the 'HIGH' region element. Cys98, Cys100, Cys125, and His127 together coordinate Zn(2+). A 'KMSKS' region motif is present at residues 237-241 (KLSKR). Residue Lys240 participates in ATP binding.

It belongs to the class-I aminoacyl-tRNA synthetase family. Glutamate--tRNA ligase type 1 subfamily. Monomer. Zn(2+) is required as a cofactor.

The protein resides in the cytoplasm. The catalysed reaction is tRNA(Glu) + L-glutamate + ATP = L-glutamyl-tRNA(Glu) + AMP + diphosphate. In terms of biological role, catalyzes the attachment of glutamate to tRNA(Glu) in a two-step reaction: glutamate is first activated by ATP to form Glu-AMP and then transferred to the acceptor end of tRNA(Glu). This Salmonella arizonae (strain ATCC BAA-731 / CDC346-86 / RSK2980) protein is Glutamate--tRNA ligase.